A 420-amino-acid polypeptide reads, in one-letter code: MNKAIASKILITLGFLFLYRVLAYIPIPGVDLAAIKAFFDSNSNNALGLFNMFSGNAVSRLSIISLGIMPYITSSIIMELLSATFPNLAKMKKERDGMQKYMQIVRYLTILITLIQAVSVSVGLRSISGGANGAIMIDMQVFMIVSAFSMLTGTMLLMWIGEQITQRGVGNGISLIIFAGIVSGIPSAISGTFNLVNTGVINILMLIGIVLIVLATIFAIIYVELAERRIPISYARKVVMQNQNKRIMNYIPIKLNLSGVIPPIFASALLVFPSTILQQATSNKTLQAIADFLSPQGYAYNILMFLLIIFFAYFYSSIVFNSKDIADNLRRNGGYIPGLRPGEGTSSFLNAVASKLTLWGSLYLALISTVPWILVKAMGVPFYFGGTAVLIVVQVAIDTMKKIEAQIYMSKYKTLSAVGF.

10 helical membrane-spanning segments follow: residues 9 to 29, 61 to 81, 104 to 124, 141 to 161, 173 to 193, 203 to 223, 257 to 277, 300 to 320, 355 to 375, and 377 to 397; these read ILITLGFLFLYRVLAYIPIPG, LSIISLGIMPYITSSIIMELL, IVRYLTILITLIQAVSVSVGL, VFMIVSAFSMLTGTMLLMWIG, ISLIIFAGIVSGIPSAISGTF, ILMLIGIVLIVLATIFAIIYV, LSGVIPPIFASALLVFPSTIL, YNILMFLLIIFFAYFYSSIVF, KLTLWGSLYLALISTVPWILV, and AMGVPFYFGGTAVLIVVQVAI.

This sequence belongs to the SecY/SEC61-alpha family. In terms of assembly, component of the Sec protein translocase complex. Heterotrimer consisting of SecY, SecE and SecG subunits. The heterotrimers can form oligomers, although 1 heterotrimer is thought to be able to translocate proteins. Interacts with the ribosome. Interacts with SecDF, and other proteins may be involved. Interacts with SecA.

It localises to the cell inner membrane. In terms of biological role, the central subunit of the protein translocation channel SecYEG. Consists of two halves formed by TMs 1-5 and 6-10. These two domains form a lateral gate at the front which open onto the bilayer between TMs 2 and 7, and are clamped together by SecE at the back. The channel is closed by both a pore ring composed of hydrophobic SecY resides and a short helix (helix 2A) on the extracellular side of the membrane which forms a plug. The plug probably moves laterally to allow the channel to open. The ring and the pore may move independently. This chain is Protein translocase subunit SecY, found in Helicobacter pylori (strain J99 / ATCC 700824) (Campylobacter pylori J99).